The sequence spans 220 residues: Protein-L-isoaspartate O-methyltransferase (220 aa).

Residue Ser67 is part of the active site.

This sequence belongs to the methyltransferase superfamily. L-isoaspartyl/D-aspartyl protein methyltransferase family.

Its subcellular location is the cytoplasm. The enzyme catalyses [protein]-L-isoaspartate + S-adenosyl-L-methionine = [protein]-L-isoaspartate alpha-methyl ester + S-adenosyl-L-homocysteine. Its function is as follows. Catalyzes the methyl esterification of L-isoaspartyl residues in peptides and proteins that result from spontaneous decomposition of normal L-aspartyl and L-asparaginyl residues. It plays a role in the repair and/or degradation of damaged proteins. The chain is Protein-L-isoaspartate O-methyltransferase from Chlorobium phaeobacteroides (strain BS1).